A 226-amino-acid chain; its full sequence is Purine nucleoside phosphorylase Cj1217c (226 aa).

Residues histidine 58, cysteine 93, and histidine 109 each contribute to the Zn(2+) site.

Belongs to the purine nucleoside phosphorylase YfiH/LACC1 family. Homodimer. The cofactor is Cu(2+). It depends on Zn(2+) as a cofactor.

It carries out the reaction adenosine + phosphate = alpha-D-ribose 1-phosphate + adenine. It catalyses the reaction S-methyl-5'-thioadenosine + phosphate = 5-(methylsulfanyl)-alpha-D-ribose 1-phosphate + adenine. The catalysed reaction is inosine + phosphate = alpha-D-ribose 1-phosphate + hypoxanthine. The enzyme catalyses adenosine + H2O + H(+) = inosine + NH4(+). Its function is as follows. Purine nucleoside enzyme that catalyzes the phosphorolysis of adenosine and inosine nucleosides, yielding D-ribose 1-phosphate and the respective free bases, adenine and hypoxanthine. Also catalyzes the phosphorolysis of S-methyl-5'-thioadenosine into adenine and S-methyl-5-thio-alpha-D-ribose 1-phosphate. Also has adenosine deaminase activity. This is Purine nucleoside phosphorylase Cj1217c from Campylobacter jejuni subsp. jejuni serotype O:2 (strain ATCC 700819 / NCTC 11168).